A 138-amino-acid chain; its full sequence is uncharacterized protein (138 aa).

Residues 89–138 (DDYEDDFEDSDFQDGDFDDFEDEDGFDDDDDFEDDDFEYEDEDNDLDFDE) form a disordered region.

This is an uncharacterized protein from Treponema pallidum (strain Nichols).